Reading from the N-terminus, the 486-residue chain is Cysteine--tRNA ligase (486 aa).

Position 30 (C30) interacts with Zn(2+). Positions 32–42 (PTVYDRAHLGN) match the 'HIGH' region motif. Zn(2+)-binding residues include C221, H246, and E250. The short motif at 279–283 (KMSKS) is the 'KMSKS' region element. Residue K282 participates in ATP binding.

Belongs to the class-I aminoacyl-tRNA synthetase family. In terms of assembly, monomer. The cofactor is Zn(2+).

It is found in the cytoplasm. The enzyme catalyses tRNA(Cys) + L-cysteine + ATP = L-cysteinyl-tRNA(Cys) + AMP + diphosphate. This is Cysteine--tRNA ligase from Cereibacter sphaeroides (strain ATCC 17025 / ATH 2.4.3) (Rhodobacter sphaeroides).